We begin with the raw amino-acid sequence, 194 residues long: Peptidyl-tRNA hydrolase (194 aa).

H17 contacts tRNA. H22 acts as the Proton acceptor in catalysis. Positions 68, 70, and 116 each coordinate tRNA.

Belongs to the PTH family. As to quaternary structure, monomer.

The protein localises to the cytoplasm. It carries out the reaction an N-acyl-L-alpha-aminoacyl-tRNA + H2O = an N-acyl-L-amino acid + a tRNA + H(+). Functionally, hydrolyzes ribosome-free peptidyl-tRNAs (with 1 or more amino acids incorporated), which drop off the ribosome during protein synthesis, or as a result of ribosome stalling. Catalyzes the release of premature peptidyl moieties from peptidyl-tRNA molecules trapped in stalled 50S ribosomal subunits, and thus maintains levels of free tRNAs and 50S ribosomes. This Xanthomonas oryzae pv. oryzae (strain MAFF 311018) protein is Peptidyl-tRNA hydrolase.